A 341-amino-acid polypeptide reads, in one-letter code: Brain-specific homeobox/POU domain protein 3 (341 aa).

The short motif at 55–65 is the POU-IV box element; the sequence is RGAEALAAVDI. The POU-specific domain maps to 182–259; that stretch reads ETETDPRELE…ILEAWLEEAE (78 aa). Positions 277–336 form a DNA-binding region, homeobox; that stretch reads KKRKRTSIAAPEKRSLEAYFAVQPRPSSEKIAAIAEKLDLKKNVVRVWFCNQRQKQKRMK.

Belongs to the POU transcription factor family. Class-4 subfamily.

The protein localises to the nucleus. In terms of biological role, may play a role in specifying terminally differentiated neuronal phenotypes. In Gallus gallus (Chicken), this protein is Brain-specific homeobox/POU domain protein 3 (BRN3).